Consider the following 725-residue polypeptide: G-quartet DNA-binding protein TGP1 (725 aa).

Positions 241–258 (KKALTDVLQIHEKKERVH) match the Nuclear localization signal motif. Disordered regions lie at residues 252-284 (EKKERVHKQQNKNKNPRNAHKNHNRQRPNLQET) and 468-614 (EIHK…GKRG). The span at 256 to 277 (RVHKQQNKNKNPRNAHKNHNRQ) shows a compositional bias: basic residues. Residues 468-478 (EIHKIDRERKR) are compositionally biased toward basic and acidic residues. Over residues 517–544 (NKYKNTSVQNNNNNKNQQRSQSQNQRPP) the composition is skewed to low complexity. Over residues 545–564 (RNYDNRQGGENRNNRQRNEN) the composition is skewed to basic and acidic residues. The segment covering 565–593 (NRNNFNGNGHRVNNQNNQRNRNSSYPRNN) has biased composition (low complexity).

In terms of processing, the N-terminus is blocked.

It localises to the nucleus. Functionally, binds specifically to parallel G4-DNA, a four-stranded structure stabilized by tetrads of hydrogen-bonded guanines. The sequence is that of G-quartet DNA-binding protein TGP1 (TGP1) from Tetrahymena thermophila.